A 247-amino-acid polypeptide reads, in one-letter code: MSKEPDRIFAQPMAQVPDFAFNEDVVRVFPDMIKRSVPGYPTIVENLGVLAAQFAQPNSVLYDLGASLGAVTQALRRHVRTDGCRVIAVDNSAAMVERCREYLNGQDSMFQELLPVEVIEGDILALDFKPASVVALNFTLQFIAPDQRTALLSRIRQSLLPGGALILSEKLRFNDAEEHALLTDLHVAFKRANGYSELEIAQKRSAIENVMKPDSLEEHRERLLAAGFSKVVPWFQCLNFASLIALP.

S-adenosyl-L-methionine-binding positions include Tyr-40, 65-67 (GAS), 90-91 (DN), 122-123 (DI), Asn-137, and Arg-204.

It belongs to the class I-like SAM-binding methyltransferase superfamily. Cx-SAM synthase family. In terms of assembly, homodimer.

It catalyses the reaction prephenate + S-adenosyl-L-methionine = carboxy-S-adenosyl-L-methionine + 3-phenylpyruvate + H2O. Catalyzes the conversion of S-adenosyl-L-methionine (SAM) to carboxy-S-adenosyl-L-methionine (Cx-SAM). The protein is Carboxy-S-adenosyl-L-methionine synthase of Pseudomonas fluorescens (strain Pf0-1).